Reading from the N-terminus, the 153-residue chain is Superoxide dismutase [Cu-Zn] (153 aa).

3 residues coordinate Cu cation: His45, His47, and His62. Residues Cys56 and Cys145 are joined by a disulfide bond. The Zn(2+) site is built by His62, His70, His79, and Asp82. Residue His119 participates in Cu cation binding.

It belongs to the Cu-Zn superoxide dismutase family. As to quaternary structure, homodimer. Requires Cu cation as cofactor. Zn(2+) serves as cofactor.

The protein localises to the cytoplasm. It catalyses the reaction 2 superoxide + 2 H(+) = H2O2 + O2. In terms of biological role, destroys radicals which are normally produced within the cells and which are toxic to biological systems. The polypeptide is Superoxide dismutase [Cu-Zn] (Drosophila orena (Fruit fly)).